Reading from the N-terminus, the 240-residue chain is Uridylate kinase (240 aa).

An ATP-binding site is contributed by 14–17; the sequence is KLSG. Gly-56 is a UMP binding site. 2 residues coordinate ATP: Gly-57 and Arg-61. UMP contacts are provided by residues Asp-76 and 137–144; that span reads TGNPFFTT. ATP contacts are provided by Thr-164, Tyr-170, and Asp-173.

Belongs to the UMP kinase family. In terms of assembly, homohexamer.

The protein resides in the cytoplasm. It catalyses the reaction UMP + ATP = UDP + ADP. It functions in the pathway pyrimidine metabolism; CTP biosynthesis via de novo pathway; UDP from UMP (UMPK route): step 1/1. With respect to regulation, inhibited by UTP. In terms of biological role, catalyzes the reversible phosphorylation of UMP to UDP. The polypeptide is Uridylate kinase (Paracidovorax citrulli (strain AAC00-1) (Acidovorax citrulli)).